The primary structure comprises 922 residues: 1,4-alpha-glucan-branching enzyme 1, chloroplastic/amyloplastic (922 aa).

The N-terminal 47 residues, 1 to 47 (MVYTISGIRFPVLPSLHKSTLRCDRRASSHSFFLKNNSSSFSRTSLY), are a transit peptide targeting the chloroplast. The tract at residues 83-130 (LENPDITSEDAQNLEDLTMKDGNKYNIDESTSSYREVGDEKGSVTSSS) is disordered. The span at 99–109 (LTMKDGNKYNI) shows a compositional bias: basic and acidic residues. Residue aspartate 494 is the Nucleophile of the active site. The active-site Proton donor is the glutamate 549. Residues 870–922 (VESEPIELSVEEAESEPIERSVEEVESETTQQSVEVESETTQQSVEVESETTQ) form a disordered region. A compositionally biased stretch (low complexity) spans 897–922 (ETTQQSVEVESETTQQSVEVESETTQ).

This sequence belongs to the glycosyl hydrolase 13 family. GlgB subfamily. As to quaternary structure, monomer. As to expression, expressed in roots, leaves, stipules, pods and flowers.

Its subcellular location is the plastid. The protein localises to the chloroplast. It is found in the amyloplast. The enzyme catalyses Transfers a segment of a (1-&gt;4)-alpha-D-glucan chain to a primary hydroxy group in a similar glucan chain.. Its pathway is glycan biosynthesis; starch biosynthesis. Catalyzes the formation of the alpha-1,6-glucosidic linkages in starch by scission of a 1,4-alpha-linked oligosaccharide from growing alpha-1,4-glucan chains and the subsequent attachment of the oligosaccharide to the alpha-1,6 position. May preferentially transfer short chains during branching. Responsible for the synthesis of about 75% of the amylopectin found in the starch granules of mature embryos. The chain is 1,4-alpha-glucan-branching enzyme 1, chloroplastic/amyloplastic (SBEI) from Pisum sativum (Garden pea).